The sequence spans 420 residues: Glucose-1-phosphate adenylyltransferase (420 aa).

Alpha-D-glucose 1-phosphate is bound by residues tyrosine 107, glycine 172, 187 to 188 (EK), and serine 205.

It belongs to the bacterial/plant glucose-1-phosphate adenylyltransferase family. In terms of assembly, homotetramer.

It catalyses the reaction alpha-D-glucose 1-phosphate + ATP + H(+) = ADP-alpha-D-glucose + diphosphate. Its pathway is glycan biosynthesis; glycogen biosynthesis. Its function is as follows. Involved in the biosynthesis of ADP-glucose, a building block required for the elongation reactions to produce glycogen. Catalyzes the reaction between ATP and alpha-D-glucose 1-phosphate (G1P) to produce pyrophosphate and ADP-Glc. In Rhizobium johnstonii (strain DSM 114642 / LMG 32736 / 3841) (Rhizobium leguminosarum bv. viciae), this protein is Glucose-1-phosphate adenylyltransferase.